We begin with the raw amino-acid sequence, 228 residues long: Octanoyltransferase (228 aa).

In terms of domain architecture, BPL/LPL catalytic spans 37 to 217 (AGGPDTLLLL…AVCDALDGRL (181 aa)). Substrate-binding positions include 75–82 (RGGKITWH), 147–149 (AIG), and 160–162 (GFA). C178 (acyl-thioester intermediate) is an active-site residue.

This sequence belongs to the LipB family.

Its subcellular location is the cytoplasm. It carries out the reaction octanoyl-[ACP] + L-lysyl-[protein] = N(6)-octanoyl-L-lysyl-[protein] + holo-[ACP] + H(+). It functions in the pathway protein modification; protein lipoylation via endogenous pathway; protein N(6)-(lipoyl)lysine from octanoyl-[acyl-carrier-protein]: step 1/2. Catalyzes the transfer of endogenously produced octanoic acid from octanoyl-acyl-carrier-protein onto the lipoyl domains of lipoate-dependent enzymes. Lipoyl-ACP can also act as a substrate although octanoyl-ACP is likely to be the physiological substrate. This Mycolicibacterium smegmatis (strain ATCC 700084 / mc(2)155) (Mycobacterium smegmatis) protein is Octanoyltransferase.